Consider the following 717-residue polypeptide: Protein Teyrha-meyrha (717 aa).

The span at 140 to 152 (FRTDSASPTCTSH) shows a compositional bias: polar residues. Disordered regions lie at residues 140-214 (FRTD…SNPA), 229-270 (HLAA…APPV), 440-498 (KIPP…QPGK), 511-539 (SQKDPHPDEHDVSTNVTTASSSSWPGEAP), 563-594 (DSCGVGVNDTNSSSSTHNNGGGSNKDLMMDTA), and 624-717 (QRRQ…DTKA). Over residues 195 to 214 (ATSSSASSSSSSSCSTSNPA) the composition is skewed to low complexity. Positions 235–263 (PHHHPHTHAHSHPHPLAHPHAHSHHHVGH) are enriched in basic residues. A compositionally biased stretch (basic and acidic residues) spans 442 to 451 (PPEDDAKSQE). Residues 452-466 (EIETVDVESCNDEVP) are compositionally biased toward acidic residues. Residues 471-482 (ELATPSSGSSGT) show a composition bias toward polar residues. Over residues 513–522 (KDPHPDEHDV) the composition is skewed to basic and acidic residues. Composition is skewed to low complexity over residues 523–533 (STNVTTASSSS) and 570–580 (NDTNSSSSTHN). Positions 630–640 (QNVGSSRSLEN) are enriched in polar residues. Low complexity predominate over residues 667–686 (NNNNNNNNNNNNSNSNNNNN). The span at 687-704 (PSTKYAESMENSLSQLSS) shows a compositional bias: polar residues.

As to expression, in embryos, expressed specifically in M12 (at protein level).

It is found in the nucleus. Its function is as follows. Required for the correct synaptic targeting of motoneurons RP5 and V to muscle 12 (M12). May be involved in the negative regulation of Tl in M12. Involved in the correct patterning of veins in the proximal (costal) region of the wing blade. This Drosophila melanogaster (Fruit fly) protein is Protein Teyrha-meyrha.